The following is a 465-amino-acid chain: Siroheme synthase (465 aa).

The precorrin-2 dehydrogenase /sirohydrochlorin ferrochelatase stretch occupies residues 1–203 (MEYLPLFHNL…GRTAEAERLL (203 aa)). NAD(+) contacts are provided by residues 22–23 (EI) and 43–44 (PS). At S128 the chain carries Phosphoserine. The tract at residues 216–465 (GEVYLVGAGP…WFEGAQAAGR (250 aa)) is uroporphyrinogen-III C-methyltransferase. P225 contacts S-adenosyl-L-methionine. D248 functions as the Proton acceptor in the catalytic mechanism. K270 acts as the Proton donor in catalysis. S-adenosyl-L-methionine-binding positions include 301 to 303 (GGD), I306, 331 to 332 (TA), M383, and G412.

This sequence in the N-terminal section; belongs to the precorrin-2 dehydrogenase / sirohydrochlorin ferrochelatase family. In the C-terminal section; belongs to the precorrin methyltransferase family.

The catalysed reaction is uroporphyrinogen III + 2 S-adenosyl-L-methionine = precorrin-2 + 2 S-adenosyl-L-homocysteine + H(+). The enzyme catalyses precorrin-2 + NAD(+) = sirohydrochlorin + NADH + 2 H(+). It catalyses the reaction siroheme + 2 H(+) = sirohydrochlorin + Fe(2+). Its pathway is cofactor biosynthesis; adenosylcobalamin biosynthesis; precorrin-2 from uroporphyrinogen III: step 1/1. It functions in the pathway cofactor biosynthesis; adenosylcobalamin biosynthesis; sirohydrochlorin from precorrin-2: step 1/1. It participates in porphyrin-containing compound metabolism; siroheme biosynthesis; precorrin-2 from uroporphyrinogen III: step 1/1. The protein operates within porphyrin-containing compound metabolism; siroheme biosynthesis; siroheme from sirohydrochlorin: step 1/1. Its pathway is porphyrin-containing compound metabolism; siroheme biosynthesis; sirohydrochlorin from precorrin-2: step 1/1. Multifunctional enzyme that catalyzes the SAM-dependent methylations of uroporphyrinogen III at position C-2 and C-7 to form precorrin-2 via precorrin-1. Then it catalyzes the NAD-dependent ring dehydrogenation of precorrin-2 to yield sirohydrochlorin. Finally, it catalyzes the ferrochelation of sirohydrochlorin to yield siroheme. This is Siroheme synthase from Stutzerimonas stutzeri (strain A1501) (Pseudomonas stutzeri).